Consider the following 299-residue polypeptide: Protease HtpX homolog (299 aa).

2 helical membrane passes run 14–34 (WLLL…VGYL) and 39–59 (GFGG…TMIF). A Zn(2+)-binding site is contributed by H143. The active site involves E144. H147 provides a ligand contact to Zn(2+). 2 helical membrane-spanning segments follow: residues 153–173 (IRIS…AVMA) and 198–218 (IILL…ATLV). E227 contacts Zn(2+).

This sequence belongs to the peptidase M48B family. It depends on Zn(2+) as a cofactor.

It is found in the cell membrane. This Streptococcus thermophilus (strain ATCC BAA-491 / LMD-9) protein is Protease HtpX homolog.